Reading from the N-terminus, the 163-residue chain is 3-isopropylmalate dehydratase small subunit 2 (163 aa).

This sequence belongs to the LeuD family. LeuD type 2 subfamily. As to quaternary structure, heterodimer of LeuC and LeuD.

It carries out the reaction (2R,3S)-3-isopropylmalate = (2S)-2-isopropylmalate. It functions in the pathway amino-acid biosynthesis; L-leucine biosynthesis; L-leucine from 3-methyl-2-oxobutanoate: step 2/4. Its function is as follows. Catalyzes the isomerization between 2-isopropylmalate and 3-isopropylmalate, via the formation of 2-isopropylmaleate. This Pyrococcus abyssi (strain GE5 / Orsay) protein is 3-isopropylmalate dehydratase small subunit 2 (leuD2).